The sequence spans 687 residues: MKERKSSKMPNNLPQLQNLIKRDSDSLIHTCFALSQFLQQLRHYQSNLQIFKLNPSHTSKVLQELVMFLCQVAHCYPGHLGSLPQELKDLLHKHHSVMDSDLRMTLCRALILLRNKDLISPTSILELFFELFRCNDKVLRQVLYTHIVTDIKNMNAKHKNNKVNSTLQNFMYTMLKDSNAVAAKKSLDVLIELYKRNVWKDAKTVNVITTACFSPVPKILVAALKFFLGSDEGSAGDDSDSESDVSYLKFEFLEMIMNSLASLLLPKHKKKHKQTSVNFSALHLINDPQGFSERLFKQLEASTGRFEVRIMLMNLISRLIGVHQLFVFNFYPFLQRYLQPHQREVTKLLMFFSQASHDLVPPEVVEPGVRTIVNNFVTERNSHEVMAVGLNAVREVCQRCPLVMTDTLLQDLAQYKTSKDKSVMMASQSLIQLFRSVNPNLLHKKDRGQPTESREDSKPLDYAAVEAKDYIPGAELINYANSTIILLYATLIPDGWETDEGCDDGSDEDGWIDVQHSSDEEQEDEDPSGENQEGEEDGQTRAARISQMRILTDEDFKKIRMKQLTKEVQPKLGKKRKRATTTEEPQGSRNELVALENIEGIYKKRKHDKASRLETVIAGRQDRPKYGTKKKAKMNEHAGTSNKEKRRKKNFMMMRHNKLVRGKTKRSFRDKQIALRDSLLKRKKSKI.

Disordered stretches follow at residues 517–549, 561–587, and 615–687; these read SSDE…SQMR, MKQL…EPQG, and TVIA…KSKI. The span at 520–537 shows a compositional bias: acidic residues; the sequence is EEQEDEDPSGENQEGEED. The span at 644-666 shows a compositional bias: basic residues; it reads EKRRKKNFMMMRHNKLVRGKTKR. A compositionally biased stretch (basic and acidic residues) spans 667-680; sequence SFRDKQIALRDSLL.

It belongs to the SDA1 family.

Its subcellular location is the nucleus. It localises to the nucleolus. Functionally, required for 60S pre-ribosomal subunits export to the cytoplasm. The polypeptide is Protein SDA1 homolog (sdad1) (Nematostella vectensis (Starlet sea anemone)).